We begin with the raw amino-acid sequence, 149 residues long: Envelope glycoprotein UL4 (149 aa).

An N-terminal signal peptide occupies residues 1 to 18 (MMLRTWISLPMVLLDAYC). N-linked (GlcNAc...) asparagine; by host glycosylation is found at Asn46, Asn51, Asn59, Asn67, Asn105, Asn109, Asn119, Asn136, and Asn145.

Belongs to the RL11 family. In terms of processing, N-glycosylated and possibly O-glycosylated.

The protein resides in the virion membrane. In Human cytomegalovirus (strain Merlin) (HHV-5), this protein is Envelope glycoprotein UL4 (UL4).